The chain runs to 157 residues: Small ribosomal subunit protein uS7 (157 aa).

It belongs to the universal ribosomal protein uS7 family. Part of the 30S ribosomal subunit. Contacts proteins S9 and S11.

Functionally, one of the primary rRNA binding proteins, it binds directly to 16S rRNA where it nucleates assembly of the head domain of the 30S subunit. Is located at the subunit interface close to the decoding center, probably blocks exit of the E-site tRNA. The sequence is that of Small ribosomal subunit protein uS7 from Stenotrophomonas maltophilia (strain R551-3).